A 726-amino-acid chain; its full sequence is Catalase-peroxidase (726 aa).

The interval 1-33 (MSTSDDIHNTTATGKCPFHQGGHDQSAGGGTTT) is disordered. The tryptophyl-tyrosyl-methioninium (Trp-Tyr) (with M-252) cross-link spans 105–226 (WHGAGTYRSI…LGATEMGLIY (122 aa)). His106 functions as the Proton acceptor in the catalytic mechanism. The segment at residues 226–252 (YVNPEGPDHSGEPLSAAAAIRATFGNM) is a cross-link (tryptophyl-tyrosyl-methioninium (Tyr-Met) (with W-105)). His267 contributes to the heme b binding site.

This sequence belongs to the peroxidase family. Peroxidase/catalase subfamily. As to quaternary structure, homodimer or homotetramer. Heme b is required as a cofactor. In terms of processing, formation of the three residue Trp-Tyr-Met cross-link is important for the catalase, but not the peroxidase activity of the enzyme.

The enzyme catalyses H2O2 + AH2 = A + 2 H2O. The catalysed reaction is 2 H2O2 = O2 + 2 H2O. Bifunctional enzyme with both catalase and broad-spectrum peroxidase activity. In Escherichia coli (strain UTI89 / UPEC), this protein is Catalase-peroxidase.